A 326-amino-acid polypeptide reads, in one-letter code: Chitinase 12 (326 aa).

An N-terminal signal peptide occupies residues 1 to 21 (MRALAVVAMVATAFLAAAVHA). The region spanning 22-62 (EQCGSQAGGAVCPNCLCCSQFGWCGSTSDYCGAGCQSQCSA) is the Chitin-binding type-1 domain. Disulfide bonds link C24/C39, C33/C45, C36/C65, C38/C52, C56/C60, C102/C165, C179/C187, and C286/C318. Residue E147 is the Proton donor of the active site.

Belongs to the glycosyl hydrolase 19 family. Chitinase class I subfamily. As to expression, expressed in meristems and at lower levels in roots and sheaths.

The catalysed reaction is Random endo-hydrolysis of N-acetyl-beta-D-glucosaminide (1-&gt;4)-beta-linkages in chitin and chitodextrins.. Functionally, hydrolyzes chitin and plays a role in defense against fungal pathogens containing chitin. Its overexpression confers enhanced resistance to sheath blight pathogen (R.solani). The protein is Chitinase 12 (Cht12) of Oryza sativa subsp. japonica (Rice).